Here is a 295-residue protein sequence, read N- to C-terminus: Peptide transport system permease protein SapC (295 aa).

6 helical membrane passes run 27 to 47 (IALF…FASY), 102 to 122 (LLVV…AGLL), 129 to 149 (FVGH…AVVI), 157 to 177 (LWNA…HTIY), 219 to 239 (VARA…ISLG), and 262 to 282 (PWTV…SIIF). Positions 98-278 (LGSALLVVFS…GFAIIFTILL (181 aa)) constitute an ABC transmembrane type-1 domain.

It belongs to the binding-protein-dependent transport system permease family. OppBC subfamily.

Its subcellular location is the cell inner membrane. Its function is as follows. Involved in a peptide intake transport system that plays a role in the resistance to antimicrobial peptides. The sequence is that of Peptide transport system permease protein SapC (sapC) from Haemophilus influenzae (strain ATCC 51907 / DSM 11121 / KW20 / Rd).